Reading from the N-terminus, the 146-residue chain is Hut operon positive regulatory protein (146 aa).

It belongs to the HutP family. Homohexamer.

Functionally, antiterminator that binds to cis-acting regulatory sequences on the mRNA in the presence of histidine, thereby suppressing transcription termination and activating the hut operon for histidine utilization. The sequence is that of Hut operon positive regulatory protein from Bacillus cereus (strain G9842).